The sequence spans 153 residues: Transcriptional regulator MraZ (153 aa).

2 consecutive SpoVT-AbrB domains span residues 7-61 (KEKH…LPDV) and 90-133 (LEMV…EPGR).

The protein belongs to the MraZ family. Forms oligomers.

The protein resides in the cytoplasm. It localises to the nucleoid. This chain is Transcriptional regulator MraZ, found in Chlorobium luteolum (strain DSM 273 / BCRC 81028 / 2530) (Pelodictyon luteolum).